A 200-amino-acid polypeptide reads, in one-letter code: NADH-quinone oxidoreductase subunit C (200 aa).

The protein belongs to the complex I 30 kDa subunit family. NDH-1 is composed of 14 different subunits. Subunits NuoB, C, D, E, F, and G constitute the peripheral sector of the complex.

It is found in the cell inner membrane. The enzyme catalyses a quinone + NADH + 5 H(+)(in) = a quinol + NAD(+) + 4 H(+)(out). NDH-1 shuttles electrons from NADH, via FMN and iron-sulfur (Fe-S) centers, to quinones in the respiratory chain. The immediate electron acceptor for the enzyme in this species is believed to be ubiquinone. Couples the redox reaction to proton translocation (for every two electrons transferred, four hydrogen ions are translocated across the cytoplasmic membrane), and thus conserves the redox energy in a proton gradient. The protein is NADH-quinone oxidoreductase subunit C of Rhizobium etli (strain ATCC 51251 / DSM 11541 / JCM 21823 / NBRC 15573 / CFN 42).